Reading from the N-terminus, the 123-residue chain is MPPKPSAKGAKKAAKTVVAKPKDGKKRRHARKESYSVYIYRVLKQVHPDTGVSSKAMSIMNSFVNDVFERIASEASRLAHYNKRSTISSREIQTAVRLILPGELAKHAVSEGTKAVTKYTSSK.

The disordered stretch occupies residues M1–A30. An O-linked (GlcNAc) serine glycan is attached at S110. Residue K118 forms a Glycyl lysine isopeptide (Lys-Gly) (interchain with G-Cter in ubiquitin) linkage.

This sequence belongs to the histone H2B family. As to quaternary structure, the nucleosome is a histone octamer containing two molecules each of H2A, H2B, H3 and H4 assembled in one H3-H4 heterotetramer and two H2A-H2B heterodimers. The octamer wraps approximately 147 bp of DNA. In terms of processing, monoubiquitination of Lys-118 gives a specific tag for epigenetic transcriptional activation and is also prerequisite for histone H3 'Lys-4' and 'Lys-79' methylation. GlcNAcylation at Ser-110 promotes monoubiquitination of Lys-118. It fluctuates in response to extracellular glucose, and associates with transcribed genes.

It is found in the nucleus. Its subcellular location is the chromosome. Its function is as follows. Core component of nucleosome. Nucleosomes wrap and compact DNA into chromatin, limiting DNA accessibility to the cellular machineries which require DNA as a template. Histones thereby play a central role in transcription regulation, DNA repair, DNA replication and chromosomal stability. DNA accessibility is regulated via a complex set of post-translational modifications of histones, also called histone code, and nucleosome remodeling. This chain is Probable histone H2B 4 (his-48), found in Caenorhabditis elegans.